The sequence spans 421 residues: Aspartokinase (421 aa).

7 to 10 (KYGG) lines the ATP pocket. 25–30 (RIVATK) is a binding site for substrate. Residue serine 41 coordinates ATP. Substrate is bound by residues 45-49 (DTTDE), glutamate 74, 125-126 (LD), 151-154 (RGGS), and serine 154. ATP contacts are provided by residues 174–175 (SD), 180–185 (YTADPR), and lysine 210. ACT domains lie at 267 to 343 (VTVL…YDDQ) and 349 to 421 (LVGA…GTGR). Substrate is bound by residues aspartate 274, 274-279 (DKPGEA), 292-294 (NID), glutamine 298, 360-361 (VT), 374-375 (NI), and 381-382 (SE).

The protein belongs to the aspartokinase family. In terms of assembly, tetramer consisting of 2 isoforms Alpha (catalytic and regulation) and of a homodimer of 2 isoforms Beta (regulation). The dimerization of the beta isoforms is stabilized by the bonding of threonine.

The enzyme catalyses L-aspartate + ATP = 4-phospho-L-aspartate + ADP. Its pathway is amino-acid biosynthesis; L-lysine biosynthesis via DAP pathway; (S)-tetrahydrodipicolinate from L-aspartate: step 1/4. It functions in the pathway amino-acid biosynthesis; L-methionine biosynthesis via de novo pathway; L-homoserine from L-aspartate: step 1/3. It participates in amino-acid biosynthesis; L-threonine biosynthesis; L-threonine from L-aspartate: step 1/5. Feedback inhibition by lysine and threonine, but he enzyme is moderately inhibited by lysine alone, and threonine alone has no effect. Functionally, catalyzes the phosphorylation of the beta-carboxyl group of aspartic acid with ATP to yield 4-phospho-L-aspartate, which is involved in the branched biosynthetic pathway leading to the biosynthesis of amino acids lysine, threonine, isoleucine and methionine. The sequence is that of Aspartokinase (lysC) from Corynebacterium glutamicum (strain ATCC 13032 / DSM 20300 / JCM 1318 / BCRC 11384 / CCUG 27702 / LMG 3730 / NBRC 12168 / NCIMB 10025 / NRRL B-2784 / 534).